Here is a 106-residue protein sequence, read N- to C-terminus: Biogenesis of lysosome-related organelles complex 1 subunit 4 (106 aa).

The stretch at 53 to 106 forms a coiled coil; that stretch reads THSEGLSEQLKMTEKNILEMENLFDQIDQLCLFVQKAKSDLDKLEKLYNVVDRQ.

It belongs to the BLOC1S4 family. In terms of assembly, component of the biogenesis of lysosome-related organelles complex-1 (BLOC-1) composed at least of blos-1, blos-2, blos-4, dsbn-1, glo-2, mutd-1 and snpn-1. Interacts with glo-2.

In terms of biological role, component of the biogenesis of lysosome-related organelles complex-1 (BLOC-1) involved in gut granule biogenesis. This Caenorhabditis elegans protein is Biogenesis of lysosome-related organelles complex 1 subunit 4 (blos-4).